A 461-amino-acid polypeptide reads, in one-letter code: MLKIFNTLSRQKEEFKPIHAGKVGMYVCGITIYDLCHIGHGRTFVAFDVVARYLRYLGYSLTYVRNVTDVDDKIIKRAIENNETCEQLTTRMLAEMHKDFDALNLERPDLEPRATHHIAEIIEMTERLIARGHAYVASNGDVMFAVDSDPDYGVLSRQDLDQLQAGARVEVADVKRNPMDFVLWKMSKPGEPRWESPWGPGRPGWHIECSAMNGKQLGAHFDIHGGGSDLMFPHHENEIAQSTCAHDGPYVNYWMHSGMVMIDKEKMSKSLNNFFTIRDVLAYYDAETVRYFLMSGHYRSQLNYSEENLKQARASLERLYTALRGTDANATPAGGAEFEARFRTAMDDDFNTPEAYSVLFDIAREVNRLKNEDMAAANGLAAELRKLAQVLGLLEQDPELFLQGGAQADDDEVAKIEALIKQRNDARSSKNWALADAARDQLNELGIVLEDGPQGTTWRRK.

Cys-28 serves as a coordination point for Zn(2+). The 'HIGH' region motif lies at 30 to 40 (ITIYDLCHIGH). Residues Cys-209, His-234, and Glu-238 each contribute to the Zn(2+) site. A 'KMSKS' region motif is present at residues 266–270 (KMSKS). Position 269 (Lys-269) interacts with ATP.

The protein belongs to the class-I aminoacyl-tRNA synthetase family. In terms of assembly, monomer. Zn(2+) is required as a cofactor.

Its subcellular location is the cytoplasm. It carries out the reaction tRNA(Cys) + L-cysteine + ATP = L-cysteinyl-tRNA(Cys) + AMP + diphosphate. The protein is Cysteine--tRNA ligase of Yersinia pestis bv. Antiqua (strain Antiqua).